We begin with the raw amino-acid sequence, 71 residues long: Gas vesicle protein A (71 aa).

Belongs to the gas vesicle GvpA family. As to quaternary structure, the gas vesicle shell is 2 nm thick and consists of a single layer of this protein. It forms helical ribs nearly perpendicular to the long axis of the vesicle.

The protein resides in the gas vesicle shell. Gas vesicles are hollow, gas filled proteinaceous nanostructures found in some microorganisms. During planktonic growth they allow positioning of the organism at a favorable depth for light or nutrient acquisition. GvpA forms the protein shell. Its function is as follows. Cluster expression in E.coli (gvpA1-gvpA2-gvpC-gvpN-gvpJ-gvpK-gvpF-gvpG-gvpV-gvpW) allows cells to float and produces irregularly shaped gas vesicles. This Nostoc sp. (strain PCC 7120 / SAG 25.82 / UTEX 2576) protein is Gas vesicle protein A.